An 81-amino-acid polypeptide reads, in one-letter code: Arminin 2a (81 aa).

Residues 1-18 form the signal peptide; the sequence is MKTVFAILFLAFIALTYA. A propeptide spanning residues 19–57 is cleaved from the precursor; that stretch reads RSYEDVKEEIKNEVVKEILEDLEEESDELDDKSKEINDA. Residue A78 is modified to Alanine amide.

This sequence belongs to the arminin family. Expressed in entodermal epithelium along the body column.

Its subcellular location is the secreted. It is found in the target cell membrane. Functionally, antimicrobial peptide with a broad-spectrum antimicrobial activity. Keeps its antibacterial activity under a wide range of salt concentrations that mimic physiological conditions of human blood, which is surprising, since Hydra is an obligate freshwater animal with nearly no salt tolerance. Does not affect red blood cells. This chain is Arminin 2a, found in Hydra vulgaris (Hydra).